The primary structure comprises 358 residues: Putative purine permease 12 (358 aa).

10 helical membrane-spanning segments follow: residues 29–49 (WILV…SVLL), 62–82 (WIST…LSLL), 100–120 (LVWI…LYSV), 128–148 (STYS…YYYI), 153–173 (ITCL…LVSL), 189–209 (LIGC…LSLM), 235–255 (VASC…LLSV), 280–299 (LGCV…FSNL), 300–316 (ISTL…IAVF), and 320–340 (LTEV…FYIY).

It belongs to the purine permeases (TC 2.A.7.14) family.

It localises to the membrane. The protein is Putative purine permease 12 (PUP12) of Arabidopsis thaliana (Mouse-ear cress).